A 296-amino-acid chain; its full sequence is Cobalamin trafficking protein CblD (296 aa).

A mitochondrion-targeting transit peptide spans 1–38; it reads MAHVLCNRARLVSYLPGFCSLVKRVINPRAFSTAGSSG. K203 bears the N6-acetyllysine mark.

As to quaternary structure, heterodimer with MMACHC. Forms a multiprotein complex with MMACHC, MTR and MTRR.

The protein resides in the cytoplasm. It localises to the mitochondrion. Its function is as follows. Involved in cobalamin metabolism and trafficking. Plays a role in regulating the biosynthesis and the proportion of two coenzymes, methylcob(III)alamin (MeCbl) and 5'-deoxyadenosylcobalamin (AdoCbl). Promotes oxidation of cob(II)alamin bound to MMACHC. The processing of cobalamin in the cytosol occurs in a multiprotein complex composed of at least MMACHC, MMADHC, MTRR (methionine synthase reductase) and MTR (methionine synthase) which may contribute to shuttle safely and efficiently cobalamin towards MTR in order to produce methionine. This is Cobalamin trafficking protein CblD (Mmadhc) from Rattus norvegicus (Rat).